A 472-amino-acid polypeptide reads, in one-letter code: 2-methylcitrate synthase, mitochondrial (472 aa).

Residues 1-29 (MALNLTTSRRALGSLKPLTRAAFVGARGY) constitute a mitochondrion transit peptide. CoA contacts are provided by Arg-75 and Lys-193. His-271 provides a ligand contact to oxaloacetate. Leu-306 serves as a coordination point for CoA. His-307 is a catalytic residue. CoA is bound by residues Val-348, Gly-350, and Tyr-351. The oxaloacetate site is built by His-353 and Arg-362. His-353 is a catalytic residue. CoA contacts are provided by Thr-402, Lys-403, and Asn-408. The active site involves Asp-410. Positions 436 and 456 each coordinate oxaloacetate.

It belongs to the citrate synthase family. Homodimer.

The protein resides in the mitochondrion matrix. It catalyses the reaction propanoyl-CoA + oxaloacetate + H2O = (2S,3S)-2-methylcitrate + CoA + H(+). It carries out the reaction oxaloacetate + acetyl-CoA + H2O = citrate + CoA + H(+). It participates in organic acid metabolism; propanoate degradation. In terms of biological role, component of the methylcitrate cycle that catalyzes the synthesis of (2S,3S)-2-methylcitrate from propionyl-CoA and oxaloacetate. Plays an important role in detoxification of propionyl-CoA, an inhibitor of both primary and secondary metabolism. Also has citrate synthase activity using as substrates acetyl-CoA and oxaloacetate. The protein is 2-methylcitrate synthase, mitochondrial of Fusarium solani (Filamentous fungus).